Consider the following 708-residue polypeptide: Alpha-galactosidase (708 aa).

Residue Asp441 is the Nucleophile of the active site. The active-site Proton donor is the Asp505.

Belongs to the glycosyl hydrolase 36 family. Homotetramer.

The enzyme catalyses Hydrolysis of terminal, non-reducing alpha-D-galactose residues in alpha-D-galactosides, including galactose oligosaccharides, galactomannans and galactolipids.. This chain is Alpha-galactosidase (rafA), found in Escherichia coli.